We begin with the raw amino-acid sequence, 451 residues long: Phosphoglucosamine mutase (451 aa).

Catalysis depends on serine 102, which acts as the Phosphoserine intermediate. Positions 102, 242, 244, and 246 each coordinate Mg(2+). Phosphoserine is present on serine 102.

It belongs to the phosphohexose mutase family. The cofactor is Mg(2+). Post-translationally, activated by phosphorylation.

The enzyme catalyses alpha-D-glucosamine 1-phosphate = D-glucosamine 6-phosphate. Its function is as follows. Catalyzes the conversion of glucosamine-6-phosphate to glucosamine-1-phosphate. This Staphylococcus aureus (strain USA300) protein is Phosphoglucosamine mutase.